The following is a 369-amino-acid chain: UPF0284 protein sll1500 (369 aa).

The protein belongs to the UPF0284 family.

This chain is UPF0284 protein sll1500, found in Synechocystis sp. (strain ATCC 27184 / PCC 6803 / Kazusa).